The chain runs to 303 residues: Quinolinate synthase (303 aa).

The iminosuccinate site is built by H24 and S41. C86 serves as a coordination point for [4Fe-4S] cluster. Residues 112–114 and S129 each bind iminosuccinate; that span reads YIN. Residue C172 coordinates [4Fe-4S] cluster. Residues 198 to 200 and T215 contribute to the iminosuccinate site; that span reads HPE. Position 260 (C260) interacts with [4Fe-4S] cluster.

It belongs to the quinolinate synthase family. Type 2 subfamily. [4Fe-4S] cluster serves as cofactor.

It is found in the cytoplasm. The catalysed reaction is iminosuccinate + dihydroxyacetone phosphate = quinolinate + phosphate + 2 H2O + H(+). The protein operates within cofactor biosynthesis; NAD(+) biosynthesis; quinolinate from iminoaspartate: step 1/1. Its function is as follows. Catalyzes the condensation of iminoaspartate with dihydroxyacetone phosphate to form quinolinate. This chain is Quinolinate synthase, found in Caldicellulosiruptor bescii (strain ATCC BAA-1888 / DSM 6725 / KCTC 15123 / Z-1320) (Anaerocellum thermophilum).